A 179-amino-acid chain; its full sequence is Large ribosomal subunit protein uL6 (179 aa).

Belongs to the universal ribosomal protein uL6 family. In terms of assembly, part of the 50S ribosomal subunit.

Its function is as follows. This protein binds to the 23S rRNA, and is important in its secondary structure. It is located near the subunit interface in the base of the L7/L12 stalk, and near the tRNA binding site of the peptidyltransferase center. This chain is Large ribosomal subunit protein uL6, found in Geobacter sulfurreducens (strain ATCC 51573 / DSM 12127 / PCA).